The sequence spans 213 residues: LexA repressor (213 aa).

Positions 27 to 47 form a DNA-binding region, H-T-H motif; sequence QTEIARAFGFKGVRAAQYHLE. Residues S133 and K170 each act as for autocatalytic cleavage activity in the active site.

The protein belongs to the peptidase S24 family. In terms of assembly, homodimer.

The enzyme catalyses Hydrolysis of Ala-|-Gly bond in repressor LexA.. Functionally, represses a number of genes involved in the response to DNA damage (SOS response), including recA and lexA. In the presence of single-stranded DNA, RecA interacts with LexA causing an autocatalytic cleavage which disrupts the DNA-binding part of LexA, leading to derepression of the SOS regulon and eventually DNA repair. The sequence is that of LexA repressor from Xanthomonas campestris.